A 637-amino-acid chain; its full sequence is 3D-(3,5/4)-trihydroxycyclohexane-1,2-dione hydrolase (637 aa).

Glu66 contacts thiamine diphosphate. The thiamine pyrophosphate binding stretch occupies residues 442-522 (SLPGDLQRLW…INILLFDNAG (81 aa)). Residues Asp493 and Asn520 each coordinate Mg(2+).

The protein belongs to the TPP enzyme family. It depends on Mg(2+) as a cofactor. The cofactor is thiamine diphosphate.

The catalysed reaction is 3D-3,5/4-trihydroxycyclohexane-1,2-dione + H2O = 5-deoxy-D-glucuronate + H(+). The protein operates within polyol metabolism; myo-inositol degradation into acetyl-CoA; acetyl-CoA from myo-inositol: step 3/7. Its function is as follows. Involved in the cleavage of the C1-C2 bond of 3D-(3,5/4)-trihydroxycyclohexane-1,2-dione (THcHDO) to yield 5-deoxy-glucuronate (5DG). This is 3D-(3,5/4)-trihydroxycyclohexane-1,2-dione hydrolase from Shouchella clausii (strain KSM-K16) (Alkalihalobacillus clausii).